A 343-amino-acid polypeptide reads, in one-letter code: Aspartate-semialdehyde dehydrogenase (343 aa).

Residues 13–16 (TGAV) and 41–42 (KS) contribute to the NADP(+) site. Arg103 provides a ligand contact to phosphate. The active-site Acyl-thioester intermediate is Cys134. Gln161 contributes to the substrate binding site. 164-165 (SG) provides a ligand contact to NADP(+). Phosphate is bound at residue Lys220. Arg241 lines the substrate pocket. His248 functions as the Proton acceptor in the catalytic mechanism. Gln321 contributes to the NADP(+) binding site.

Belongs to the aspartate-semialdehyde dehydrogenase family. Homodimer.

The catalysed reaction is L-aspartate 4-semialdehyde + phosphate + NADP(+) = 4-phospho-L-aspartate + NADPH + H(+). It participates in amino-acid biosynthesis; L-lysine biosynthesis via DAP pathway; (S)-tetrahydrodipicolinate from L-aspartate: step 2/4. The protein operates within amino-acid biosynthesis; L-methionine biosynthesis via de novo pathway; L-homoserine from L-aspartate: step 2/3. Its pathway is amino-acid biosynthesis; L-threonine biosynthesis; L-threonine from L-aspartate: step 2/5. Functionally, catalyzes the NADPH-dependent formation of L-aspartate-semialdehyde (L-ASA) by the reductive dephosphorylation of L-aspartyl-4-phosphate. In Campylobacter jejuni subsp. jejuni serotype O:2 (strain ATCC 700819 / NCTC 11168), this protein is Aspartate-semialdehyde dehydrogenase.